A 111-amino-acid chain; its full sequence is Nucleoid-associated protein lhv_0401 (111 aa).

The protein belongs to the YbaB/EbfC family. In terms of assembly, homodimer.

It is found in the cytoplasm. The protein resides in the nucleoid. Binds to DNA and alters its conformation. May be involved in regulation of gene expression, nucleoid organization and DNA protection. The chain is Nucleoid-associated protein lhv_0401 from Lactobacillus helveticus (strain DPC 4571).